Here is a 312-residue protein sequence, read N- to C-terminus: Gamma-soluble NSF attachment protein (312 aa).

The tract at residues 281 to 312 is disordered; it reads KKKSPATPQAKPDGVTATAADEEEDEYSGGLC. A Phosphoserine modification is found at serine 284. Threonine 287 is modified (phosphothreonine). Acidic residues predominate over residues 300–312; sequence ADEEEDEYSGGLC. At serine 308 the chain carries Phosphoserine.

This sequence belongs to the SNAP family. Interacts with RAB11FIP5. Interacts with VTI1A.

The protein resides in the membrane. It is found in the golgi apparatus. Required for vesicular transport between the endoplasmic reticulum and the Golgi apparatus. In Homo sapiens (Human), this protein is Gamma-soluble NSF attachment protein.